A 135-amino-acid chain; its full sequence is uncharacterized protein (135 aa).

This is an uncharacterized protein from Acanthamoeba polyphaga (Amoeba).